The following is a 101-amino-acid chain: Gastrin (101 aa).

Residues 1 to 21 (MQRLCVYVLIFALALAAFSEA) form the signal peptide. The segment at 22 to 82 (SWKPRSQQPD…SKKQGPWLEE (61 aa)) is disordered. Gln59 is subject to Pyrrolidone carboxylic acid; in form big gastrin. A Pyrrolidone carboxylic acid; in form gastrin modification is found at Gln76. Tyr87 bears the Sulfotyrosine; partial mark. Phe92 is modified (phenylalanine amide). Ser96 bears the Phosphoserine mark. Positions 96 to 101 (SAEDEN) are cleaved as a propeptide — removed in mature form.

This sequence belongs to the gastrin/cholecystokinin family. Two different processing pathways probably exist in antral G-cells. In the dominant pathway progastrin is cleaved at three sites resulting in two major bioactive gastrins, gastrin-34 and gastrin-17. In the putative alternative pathway, progastrin may be processed only at the most C-terminal dibasic site resulting in the synthesis of gastrin-71. Post-translationally, sulfation enhances proteolytic processing, and blocks peptide degradation. Levels of sulfation differ between proteolytically-cleaved gastrins. Thus, gastrin-6 is almost 73% sulfated, whereas the larger gastrins are less than 50% sulfated. Sulfation levels are also tissue-specific.

The protein localises to the secreted. Gastrin stimulates the stomach mucosa to produce and secrete hydrochloric acid and the pancreas to secrete its digestive enzymes. It also stimulates smooth muscle contraction and increases blood circulation and water secretion in the stomach and intestine. In Homo sapiens (Human), this protein is Gastrin (GAST).